We begin with the raw amino-acid sequence, 277 residues long: Large ribosomal subunit protein mL46 (277 aa).

K217 carries the N6-succinyllysine modification. Position 228 is an N6-acetyllysine (K228). The residue at position 246 (K246) is an N6-succinyllysine.

The protein belongs to the mitochondrion-specific ribosomal protein mL46 family. Component of the mitochondrial ribosome large subunit (39S) which comprises a 16S rRNA and about 50 distinct proteins.

It localises to the mitochondrion. The chain is Large ribosomal subunit protein mL46 (Mrpl46) from Rattus norvegicus (Rat).